A 445-amino-acid polypeptide reads, in one-letter code: Phosphoglucosamine mutase (445 aa).

Serine 102 acts as the Phosphoserine intermediate in catalysis. 4 residues coordinate Mg(2+): serine 102, aspartate 241, aspartate 243, and aspartate 245. Residue serine 102 is modified to Phosphoserine.

Belongs to the phosphohexose mutase family. Mg(2+) is required as a cofactor. Post-translationally, activated by phosphorylation.

It catalyses the reaction alpha-D-glucosamine 1-phosphate = D-glucosamine 6-phosphate. Catalyzes the conversion of glucosamine-6-phosphate to glucosamine-1-phosphate. The polypeptide is Phosphoglucosamine mutase (Escherichia fergusonii (strain ATCC 35469 / DSM 13698 / CCUG 18766 / IAM 14443 / JCM 21226 / LMG 7866 / NBRC 102419 / NCTC 12128 / CDC 0568-73)).